A 544-amino-acid chain; its full sequence is MSIFIGGAWPYANGSLHLGHIASLLPGDILARYYRAKGENVLYVSGSDCNGTPIAIRAKQEGVTAKEIANKYHEEFERCFRNLGFTYDCYTRTDSEHHHETVQNVFLRLLEEGHIYKKTVEQAYCETCTQFLPDCYVEGVCPHCHEEARGDQCDACSAILDPLDLLEKKCKLCGSTPSIQETEHFYFALHTFQEQIKRAVEIAKQTGTWRDNAIQLTERYVKEGLLDRAVSRDLPIGVPIPVEGYEDKKIYVWIEAVTGYYSASKHWAEETGKDDREFWDGEAKTYYVHGKDNIPFHSVIWPAVLLGIGEGTIPRHIVSNEYLTVEKRKLSTSKNWAVWVPDILERYDPDSIRYFLIVNAPENRDTDFSWREFIYSHNSELLGAYGNFVNRTLKFIEKYYGGIMPKGSIDVELKDKIERLYKHVGEAIEQTKFKVALESIFDAVRFANKYFDERQPWKEREDDPVSCEETIYNCVYLIANFANLLEPFLPFSSERIRNTLSIVNRNWEPQHTLPSRIDSVQPLFERIDVKQIECELEKLYGAVK.

Residues 10-20 (PYANGSLHLGH) carry the 'HIGH' region motif. Zn(2+) contacts are provided by cysteine 141, cysteine 144, cysteine 153, and cysteine 156. A 'KMSKS' region motif is present at residues 329 to 333 (KLSTS). Residue threonine 332 participates in ATP binding.

Belongs to the class-I aminoacyl-tRNA synthetase family. MetG type 1 subfamily. In terms of assembly, monomer. Zn(2+) is required as a cofactor.

The protein localises to the cytoplasm. The enzyme catalyses tRNA(Met) + L-methionine + ATP = L-methionyl-tRNA(Met) + AMP + diphosphate. Is required not only for elongation of protein synthesis but also for the initiation of all mRNA translation through initiator tRNA(fMet) aminoacylation. The chain is Methionine--tRNA ligase 2 from Bacillus anthracis.